A 284-amino-acid chain; its full sequence is 2-dehydro-3-deoxyphosphooctonate aldolase (284 aa).

Belongs to the KdsA family.

The protein resides in the cytoplasm. It carries out the reaction D-arabinose 5-phosphate + phosphoenolpyruvate + H2O = 3-deoxy-alpha-D-manno-2-octulosonate-8-phosphate + phosphate. It participates in carbohydrate biosynthesis; 3-deoxy-D-manno-octulosonate biosynthesis; 3-deoxy-D-manno-octulosonate from D-ribulose 5-phosphate: step 2/3. The protein operates within bacterial outer membrane biogenesis; lipopolysaccharide biosynthesis. In Escherichia coli O6:K15:H31 (strain 536 / UPEC), this protein is 2-dehydro-3-deoxyphosphooctonate aldolase.